The primary structure comprises 283 residues: ATP phosphoribosyltransferase (283 aa).

This sequence belongs to the ATP phosphoribosyltransferase family. Long subfamily. Mg(2+) serves as cofactor.

It localises to the cytoplasm. The catalysed reaction is 1-(5-phospho-beta-D-ribosyl)-ATP + diphosphate = 5-phospho-alpha-D-ribose 1-diphosphate + ATP. It functions in the pathway amino-acid biosynthesis; L-histidine biosynthesis; L-histidine from 5-phospho-alpha-D-ribose 1-diphosphate: step 1/9. Its activity is regulated as follows. Feedback inhibited by histidine. Catalyzes the condensation of ATP and 5-phosphoribose 1-diphosphate to form N'-(5'-phosphoribosyl)-ATP (PR-ATP). Has a crucial role in the pathway because the rate of histidine biosynthesis seems to be controlled primarily by regulation of HisG enzymatic activity. This is ATP phosphoribosyltransferase from Rhodococcus jostii (strain RHA1).